A 619-amino-acid polypeptide reads, in one-letter code: 1-deoxy-D-xylulose-5-phosphate synthase (619 aa).

Thiamine diphosphate is bound by residues histidine 74 and 115–117; that span reads GHS. Aspartate 146 is a Mg(2+) binding site. Residues 147 to 148, asparagine 175, tyrosine 285, and glutamate 365 contribute to the thiamine diphosphate site; that span reads GA. A Mg(2+)-binding site is contributed by asparagine 175.

The protein belongs to the transketolase family. DXPS subfamily. Homodimer. Requires Mg(2+) as cofactor. The cofactor is thiamine diphosphate.

The enzyme catalyses D-glyceraldehyde 3-phosphate + pyruvate + H(+) = 1-deoxy-D-xylulose 5-phosphate + CO2. Its pathway is metabolic intermediate biosynthesis; 1-deoxy-D-xylulose 5-phosphate biosynthesis; 1-deoxy-D-xylulose 5-phosphate from D-glyceraldehyde 3-phosphate and pyruvate: step 1/1. In terms of biological role, catalyzes the acyloin condensation reaction between C atoms 2 and 3 of pyruvate and glyceraldehyde 3-phosphate to yield 1-deoxy-D-xylulose-5-phosphate (DXP). In Clostridium perfringens (strain SM101 / Type A), this protein is 1-deoxy-D-xylulose-5-phosphate synthase.